The chain runs to 83 residues: Small ribosomal subunit protein uS17 (83 aa).

This sequence belongs to the universal ribosomal protein uS17 family. In terms of assembly, part of the 30S ribosomal subunit.

One of the primary rRNA binding proteins, it binds specifically to the 5'-end of 16S ribosomal RNA. The sequence is that of Small ribosomal subunit protein uS17 from Chlamydia trachomatis serovar L2 (strain ATCC VR-902B / DSM 19102 / 434/Bu).